Here is a 416-residue protein sequence, read N- to C-terminus: Exodeoxyribonuclease 7 large subunit (416 aa).

The protein belongs to the XseA family. Heterooligomer composed of large and small subunits.

Its subcellular location is the cytoplasm. The enzyme catalyses Exonucleolytic cleavage in either 5'- to 3'- or 3'- to 5'-direction to yield nucleoside 5'-phosphates.. Bidirectionally degrades single-stranded DNA into large acid-insoluble oligonucleotides, which are then degraded further into small acid-soluble oligonucleotides. The sequence is that of Exodeoxyribonuclease 7 large subunit from Sulfurimonas denitrificans (strain ATCC 33889 / DSM 1251) (Thiomicrospira denitrificans (strain ATCC 33889 / DSM 1251)).